Consider the following 636-residue polypeptide: Molybdenum cofactor biosynthesis protein 1 (636 aa).

The segment at 1-383 (MAARPAFGIV…QMKNRPMILI (383 aa)) is molybdenum cofactor biosynthesis protein A. Positions 19–40 (RGCSSGAPVTQPRPGEPSRPTR) are disordered. Ser64 carries the post-translational modification Phosphoserine. Residues 64–279 (SFGRQHSYLR…TIRQRWPGLE (216 aa)) enclose the Radical SAM core domain. GTP is bound at residue Arg73. 2 residues coordinate [4Fe-4S] cluster: Cys80 and Cys84. Tyr86 is a binding site for S-adenosyl-L-methionine. Cys87 contributes to the [4Fe-4S] cluster binding site. GTP is bound at residue Arg123. Position 127 (Gly127) interacts with S-adenosyl-L-methionine. GTP is bound at residue Thr154. Ser178 is a binding site for S-adenosyl-L-methionine. An N6-acetyllysine modification is found at Lys198. A GTP-binding site is contributed by Lys215. Met249 contacts S-adenosyl-L-methionine. 2 residues coordinate [4Fe-4S] cluster: Cys312 and Cys315. Residue 317-319 (RLR) participates in GTP binding. [4Fe-4S] cluster is bound at residue Cys329. A molybdenum cofactor biosynthesis protein C region spans residues 414–636 (QCLSDQMASL…GGQRGDFHRA (223 aa)). Residues 444–484 (SPQRHYSSYPDPDTHSKCLSTGSQAPDAPSGPGPTSNQLTH) are disordered. The residue at position 528 (Lys528) is an N6-acetyllysine. The For molybdenum cofactor biosynthesis protein C activity role is filled by Asp606.

This sequence in the C-terminal section; belongs to the MoaC family. In the N-terminal section; belongs to the radical SAM superfamily. MoaA family. In terms of assembly, isoform Mocs1a and isoform Mocs1b probably form a heterooligomer. It depends on [4Fe-4S] cluster as a cofactor.

The catalysed reaction is GTP + AH2 + S-adenosyl-L-methionine = (8S)-3',8-cyclo-7,8-dihydroguanosine 5'-triphosphate + 5'-deoxyadenosine + L-methionine + A + H(+). It carries out the reaction (8S)-3',8-cyclo-7,8-dihydroguanosine 5'-triphosphate = cyclic pyranopterin phosphate + diphosphate. It participates in cofactor biosynthesis; molybdopterin biosynthesis. In terms of biological role, isoform Mocs1a and isoform Mocs1b probably form a complex that catalyzes the conversion of 5'-GTP to cyclic pyranopterin monophosphate (cPMP). Mocs1a catalyzes the cyclization of GTP to (8S)-3',8-cyclo-7,8-dihydroguanosine 5'-triphosphate and Mocs1b catalyzes the subsequent conversion of (8S)-3',8-cyclo-7,8-dihydroguanosine 5'-triphosphate to cPMP. This Mus musculus (Mouse) protein is Molybdenum cofactor biosynthesis protein 1 (Mocs1).